A 326-amino-acid polypeptide reads, in one-letter code: Eukaryotic translation initiation factor 3 subunit I (326 aa).

WD repeat units lie at residues 8 to 47 (GHER…RLGT), 50 to 89 (GHQG…VIAS), 145 to 184 (MVES…KVVD), 188 to 227 (DHAA…CLKT), and 285 to 326 (GHFG…NIFE).

This sequence belongs to the eIF-3 subunit I family. As to quaternary structure, component of the eukaryotic translation initiation factor 3 (eIF-3) complex. The eIF-3 complex interacts with pix.

The protein localises to the cytoplasm. Component of the eukaryotic translation initiation factor 3 (eIF-3) complex, which is involved in protein synthesis of a specialized repertoire of mRNAs and, together with other initiation factors, stimulates binding of mRNA and methionyl-tRNAi to the 40S ribosome. The eIF-3 complex specifically targets and initiates translation of a subset of mRNAs involved in cell proliferation. This chain is Eukaryotic translation initiation factor 3 subunit I, found in Drosophila grimshawi (Hawaiian fruit fly).